A 344-amino-acid chain; its full sequence is Trace amine-associated receptor 8c (344 aa).

Topologically, residues 1–31 (MTSNFSQPALQLCYENTNGSCIKTPYSPGPR) are extracellular. 2 N-linked (GlcNAc...) asparagine glycosylation sites follow: Asn4 and Asn18. 2 disulfide bridges follow: Cys21-Cys185 and Cys104-Cys189. Residues 32–52 (VILYMVYGFGAVLAVCGNLLV) form a helical membrane-spanning segment. Residues 53–67 (VISVLHFKQLHSPAN) are Cytoplasmic-facing. Residues 68–88 (FLIASLASADFLVGISVMPFS) traverse the membrane as a helical segment. Over 89–111 (MVRSIESCWYFGDAFCSLHSCCD) the chain is Extracellular. A helical membrane pass occupies residues 112–132 (VAFCYSSALHLCFISVDRYIA). At 133–146 (VTDPLVYPTKFTVS) the chain is on the cytoplasmic side. Residues 147 to 167 (VSGICISISWILPLVYSSAVF) form a helical membrane-spanning segment. The Extracellular segment spans residues 168-195 (YTGISAKGIESLVSALNCVGGCQVVVNQ). A helical membrane pass occupies residues 196 to 216 (DWVLISFLLFFIPTVVMIILY). Over 217-260 (SKIFLVAKQQAVKIETSVSGNRGESSSESHKARVAKRERKAAKT) the chain is Cytoplasmic. A helical transmembrane segment spans residues 261–281 (LGVTVVAFMVSWLPYTIDALV). Asp282 is a topological domain (extracellular). Residues 283–303 (AFMGFITPAYVYEICCWSAYY) form a helical membrane-spanning segment. The Cytoplasmic portion of the chain corresponds to 304–344 (NSAMNPLIYAFFYPWFRKAIKLILSGKILKGHSSTTNLFSE).

The protein belongs to the G-protein coupled receptor 1 family. Specifically expressed in neurons of the olfactory epithelium.

The protein resides in the cell membrane. Its function is as follows. Olfactory receptor specific for trace amines, such ascyclohexylamine (1-MPD). Trace amine compounds are enriched in animal body fluids and act on trace amine-associated receptors (TAARs) to elicit both intraspecific and interspecific innate behaviors. Ligand-binding causes a conformation change that triggers signaling via G(s)-class of G alpha proteins (GNAL or GNAS). The sequence is that of Trace amine-associated receptor 8c from Mus musculus (Mouse).